Here is an 874-residue protein sequence, read N- to C-terminus: Alanine--tRNA ligase (874 aa).

Zn(2+)-binding residues include His-563, His-567, Cys-665, and His-669.

Belongs to the class-II aminoacyl-tRNA synthetase family. Zn(2+) serves as cofactor.

Its subcellular location is the cytoplasm. It catalyses the reaction tRNA(Ala) + L-alanine + ATP = L-alanyl-tRNA(Ala) + AMP + diphosphate. Functionally, catalyzes the attachment of alanine to tRNA(Ala) in a two-step reaction: alanine is first activated by ATP to form Ala-AMP and then transferred to the acceptor end of tRNA(Ala). Also edits incorrectly charged Ser-tRNA(Ala) and Gly-tRNA(Ala) via its editing domain. The sequence is that of Alanine--tRNA ligase from Haemophilus influenzae (strain ATCC 51907 / DSM 11121 / KW20 / Rd).